A 691-amino-acid polypeptide reads, in one-letter code: DNA ligase (691 aa).

Residues Asp41–Asp45, Ser90–Leu91, and Glu130 each bind NAD(+). Catalysis depends on Lys132, which acts as the N6-AMP-lysine intermediate. Positions 153, 190, 307, and 331 each coordinate NAD(+). Residues Cys425, Cys428, Cys443, and Cys449 each coordinate Zn(2+). Residues Ala610–Arg691 form the BRCT domain.

Belongs to the NAD-dependent DNA ligase family. LigA subfamily. It depends on Mg(2+) as a cofactor. Mn(2+) is required as a cofactor.

It carries out the reaction NAD(+) + (deoxyribonucleotide)n-3'-hydroxyl + 5'-phospho-(deoxyribonucleotide)m = (deoxyribonucleotide)n+m + AMP + beta-nicotinamide D-nucleotide.. Its function is as follows. DNA ligase that catalyzes the formation of phosphodiester linkages between 5'-phosphoryl and 3'-hydroxyl groups in double-stranded DNA using NAD as a coenzyme and as the energy source for the reaction. It is essential for DNA replication and repair of damaged DNA. The protein is DNA ligase of Burkholderia thailandensis (strain ATCC 700388 / DSM 13276 / CCUG 48851 / CIP 106301 / E264).